The following is a 121-amino-acid chain: Ribosome-binding factor A (121 aa).

This sequence belongs to the RbfA family. As to quaternary structure, monomer. Binds 30S ribosomal subunits, but not 50S ribosomal subunits or 70S ribosomes.

The protein resides in the cytoplasm. One of several proteins that assist in the late maturation steps of the functional core of the 30S ribosomal subunit. Associates with free 30S ribosomal subunits (but not with 30S subunits that are part of 70S ribosomes or polysomes). Required for efficient processing of 16S rRNA. May interact with the 5'-terminal helix region of 16S rRNA. This Clostridium acetobutylicum (strain ATCC 824 / DSM 792 / JCM 1419 / IAM 19013 / LMG 5710 / NBRC 13948 / NRRL B-527 / VKM B-1787 / 2291 / W) protein is Ribosome-binding factor A.